The sequence spans 127 residues: Glycine cleavage system H protein (127 aa).

Positions 24 to 105 (TALVGITDFA…YGEGWMVKMK (82 aa)) constitute a Lipoyl-binding domain. An N6-lipoyllysine modification is found at lysine 65.

It belongs to the GcvH family. In terms of assembly, the glycine cleavage system is composed of four proteins: P, T, L and H. (R)-lipoate serves as cofactor.

The glycine cleavage system catalyzes the degradation of glycine. The H protein shuttles the methylamine group of glycine from the P protein to the T protein. The chain is Glycine cleavage system H protein from Chlorobium phaeovibrioides (strain DSM 265 / 1930) (Prosthecochloris vibrioformis (strain DSM 265)).